A 439-amino-acid polypeptide reads, in one-letter code: Mitochondrial distribution and morphology protein 10 (439 aa).

The tract at residues 275–305 (LPDATPPSFQVPSSSSSSSNPVSPSTSQPPT) is disordered. Positions 280-305 (PPSFQVPSSSSSSSNPVSPSTSQPPT) are enriched in low complexity.

Belongs to the MDM10 family. In terms of assembly, component of the ER-mitochondria encounter structure (ERMES) or MDM complex, composed of MMM1, MDM10, MDM12 and MDM34. Associates with the mitochondrial outer membrane sorting assembly machinery SAM(core) complex.

It localises to the mitochondrion outer membrane. Its function is as follows. Component of the ERMES/MDM complex, which serves as a molecular tether to connect the endoplasmic reticulum and mitochondria. Components of this complex are involved in the control of mitochondrial shape and protein biogenesis and may function in phospholipid exchange. MDM10 is involved in the late assembly steps of the general translocase of the mitochondrial outer membrane (TOM complex). Functions in the TOM40-specific route of the assembly of outer membrane beta-barrel proteins, including the association of TOM40 with the receptor TOM22 and small TOM proteins. Can associate with the SAM(core) complex as well as the MDM12-MMM1 complex, both involved in late steps of the major beta-barrel assembly pathway, that is responsible for biogenesis of all outer membrane beta-barrel proteins. May act as a switch that shuttles between both complexes and channels precursor proteins into the TOM40-specific pathway. Plays a role in mitochondrial morphology and in the inheritance of mitochondria. In Laccaria bicolor (strain S238N-H82 / ATCC MYA-4686) (Bicoloured deceiver), this protein is Mitochondrial distribution and morphology protein 10.